Here is a 773-residue protein sequence, read N- to C-terminus: Endonuclease MutS2 (773 aa).

334–341 lines the ATP pocket; it reads GANAGGKT. The region spanning 698–773 is the Smr domain; the sequence is VDLRGMRADV…GDGMTMVTLK (76 aa).

It belongs to the DNA mismatch repair MutS family. MutS2 subfamily. Homodimer. Binds to stalled ribosomes, contacting rRNA.

In terms of biological role, endonuclease that is involved in the suppression of homologous recombination and thus may have a key role in the control of bacterial genetic diversity. Its function is as follows. Acts as a ribosome collision sensor, splitting the ribosome into its 2 subunits. Detects stalled/collided 70S ribosomes which it binds and splits by an ATP-hydrolysis driven conformational change. Acts upstream of the ribosome quality control system (RQC), a ribosome-associated complex that mediates the extraction of incompletely synthesized nascent chains from stalled ribosomes and their subsequent degradation. Probably generates substrates for RQC. This is Endonuclease MutS2 from Solidesulfovibrio magneticus (strain ATCC 700980 / DSM 13731 / RS-1) (Desulfovibrio magneticus).